The following is a 315-amino-acid chain: Protein OPG185 (315 aa).

An N-terminal signal peptide occupies residues 1 to 16 (MTRLPILLLLISLVYA). Positions 17–121 (TPFPQTSKKI…NDTDKVDYEE (105 aa)) constitute an Ig-like V-type domain. At 17 to 279 (TPFPQTSKKI…SNYKTKDFVE (263 aa)) the chain is on the virion surface side. Cys34 and Cys103 are oxidised to a cystine. Residues Asn37, Asn69, Asn112, and Asn161 are each glycosylated (N-linked (GlcNAc...) asparagine; by host). Residues 191–202 (SINTVSASSGES) show a composition bias toward polar residues. The tract at residues 191–213 (SINTVSASSGESTTDETPEPITD) is disordered. Residue Asn254 is glycosylated (N-linked (GlcNAc...) asparagine; by host). Residues 280 to 303 (IFGITALIILSAVAIFCITYYIYN) traverse the membrane as a helical segment. The Intravirion segment spans residues 304–315 (KRSRKYKTENKV).

Belongs to the orthopoxvirus OPG185 family. Heterodimerizes with OPG040. The heterodimer OPG185-OPG040 interacts with components of the entry fusion complex OPG143 and OPG094. Heterodimer with C3/VPC protein; disulfide-linked. Glycosylated; contains phosphate and sulfate-substituted glycans. O-glycosylation is required for hemagglutination and hemadsorption activities of infected cell membranes.

The protein resides in the virion membrane. It is found in the host membrane. Functionally, prevents cell to cell fusion by interacting with and directing the viral OPG040 protein on the host plasma membrane. The OPG185-OPG040 complex associates with components of the entry fusion complex (EFC) presumably to avoid superinfection and syncytium formation. Via its interaction with C3/VCP protein, protects the infected cell and probably also the extracellular enveloped virus from complement attack. The polypeptide is Protein OPG185 (OPG185) (Homo sapiens (Human)).